A 2431-amino-acid polypeptide reads, in one-letter code: MNIPKVTTSLGAAEKAKPERVASVAAAAFNAVSLQKRSGDDTATPAEDPTRKKAKTELLLGTGTAAPSLPAKASSTAPQQLLYQRSGQQAKAQVKAASEPQDVETADGVWDARDQQIIVCNFGSGTEMGAIKAEDADKQSEYRISTPRNSQSNPLLHRNTAFTSFTKKEGASSSASSSSSTASVISIEPSGSGQDHAENSGKSEDLDYVLMPASGADSSTSVGNSTGTGTPAGTPIGATTSTIILNANNGTAGVSGAGTTTILTQKSGHTNYNIFNTTATGSQTPTTTLLNRVNLHPKMKTQLMVNAKKLSEVTQTTAKVSIGNKTISVPLLKPLMSASGAATAGGATIVESKQLLQPGGQVTTVMSAAQQSGGQQVHPHVHSHAHHNFTKLIKRGPKNSGTIVSFSGLQIKPANTKIVATKVVSKKMLQLQQHQQQIQQQQQLQQLQVTSGGGLAPPTGSIVTITTTNPSQTYAMVQDSATVGPAAHSEDDAPAPRKITAYSENLQKILNKSKSQESTGGPEEFTNINSVVIKPLDKNTLNCPPSFNIFKQQQHSQAAQSQSISAVGSGAGTPVTFTMASGNASDLATTSTVSVSAGTICINSPMMGTRPIISIQNKNISLVLSKTTMAQQKPKMITTTTLSSQAALQMHHALIQDSSADKAGSSANSGSATSGASMQLKLTTANTPTKLSVSLAPDVVKLEEVGSESKAKLLVKQEAVVKDSTGTPTSEERAEEIGTPEKRLNANATMTAINQVQNQSANQIQMATSTSTASNPSTPNPTVNATPMNNQRSAAEDNALLKQLLQNNSSSHSLNQISITSAHVGSASASAPLSARKVINVRAPSMGKVRSLEDQLARPVIPPVPTATQAAGSSSSSGSVATSTTTTTVASGGSSQQVATASATALPVSAVAITTPGVGGEAKLEQKSDQPAAIMQNQSQNQAPPPPPPPQQQQQQQLHQPQQLQPSPHQVKQTVQIVSKETSFISGPVAAKTLVTEATSKPAELLPPPPYEMATAPISNVTISISTKQAAPKELQMKPKAVAMSLPMEQGDESLPEQAEPPLHSEQGATAAGVAPHSGGPLVSAQWTNNHLEGGVATTKIPFKPGEPQKRKLPMHPQLDEKQIQQQAEIPISTSLPTTPTGQGTPDKVQLISAIATYVKKSGVPNEAQPIQNQSQGQVQMQAQMQATMQGHLSGQMSGQISGHAAGQIPAQMHLQVQHQLHMAVHPQQQQQQLHQNQPQNATIPLPVTGQGAVPIPVPTMESKAGDQRKRRKREVQKPRRTNLNAGQAGGALKDLTGPLPAGAMVQLAGMPPGTQYIQGAASGTGHVITSTGQGVTLGGVGASTGASSSPMLKKRVRKFSKVEEDHDAFTEKLLTHIRQMQPLQVLEPHLNRNFHFLIGSNETSGGGSPASMSSAASAGSSSAGGGKLKGGSRGWPLSRHLEGLEDCDGTVLGRYGRVNLPGIPSLYDSERFGGSRGLVGGSARTRSPSPAESPGAEKMLPMSSIQNDFYDQEFSTHMERNPRERLVRHIGAVKDCNLETVDLVESEGVAAWATLPRLTRYPGLILLNGNSRCHGRMSPVALPEDPLTMRFPVSPLLRSCGEELRKTQQMELGMGPLGNNNNNNYQQKNQNVILALPASASENIAGVLRDLANLLHLAPALTCKIIEDKIGNKLEDQFMNQDDEKHVDFKRPLSQVSHGHLRKILNGRRKLCRSCGNVVHATGLRVPRHSVPALEEQLPRLAQLMDMLPRKSVPPPFVYFCDRACFARFKWNGKDGQAEAASLLLQPAGGSAVKSSNGDSPGSFCASSTAPAEMVVKQEPEDEDEKTPSVPGNPTNIPAQRKCIVKCFSADCFTTDSAPSGLELDGTAGAGTGAGPVNNTVWETETSGLQLEDTRQCVFCNQRGDGQADGPSRLLNFDVDKWVHLNCALWSNGVYETVSGALMNFQTALQAGLSQACSACHQPGATIKCFKSRCNSLYHLPCAIREECVFYKNKSVHCSVHGHAHAGITMGAGAGATTGAGLGGSVADNELSSLVVHRRVFVDRDENRQVATVMHYSELSNLLRVGNMTFLNVGQLLPHQLEAFHTPHYIYPIGYKVSRYYWCVRRPNRRCRYICSIAEAGCKPEFRIQVQDAGDKEPEREFRGSSPSAVWQQILQPITRLRKVHKWLQLFPQHISGEDLFGLTEPAIVRILESLPGIETLTDYRFKYGRNPLLEFPLAINPSGAARTEPKQRQLLVWRKPHTQRTAGSCSTQRMANSAAIAGEVACPYSKQFVHSKSSQYKKMKQEWRNNVYLARSKIQGLGLYAARDIEKHTMIIEYIGEVIRTEVSEIREKQYESKNRGIYMFRLDEDRVVDATLSGGLARYINHSCNPNCVTEIVEVDRDVRIIIFAKRKIYRGEELSYDYKFDIEDESHKIPCACGAPNCRKWMN.

Disordered regions lie at residues 34 to 78, 135 to 201, 213 to 235, and 759 to 789; these read LQKR…STAP, DADK…ENSG, ASGA…AGTP, and QSAN…TPMN. Residues 142 to 165 show a composition bias toward polar residues; sequence YRISTPRNSQSNPLLHRNTAFTSF. Composition is skewed to low complexity over residues 171–183, 218–235, and 767–787; these read ASSS…STAS, SSTS…AGTP, and ATST…NATP. Positions 801–805 match the LXXLL motif 1 motif; sequence LKQLL. 5 disordered regions span residues 863 to 895, 918 to 973, 1226 to 1292, 1404 to 1433, and 1478 to 1500; these read PVPT…GGSS, VGGE…QVKQ, HPQQ…AGGA, TSGG…KGGS, and GLVG…AEKM. Low complexity-rich tracts occupy residues 866 to 895, 952 to 970, and 1226 to 1241; these read TATQ…GGSS, QQQQ…SPHQ, and HPQQ…QPQN. Residues 1269 to 1281 are compositionally biased toward basic residues; it reads RKRRKREVQKPRR. A compositionally biased stretch (low complexity) spans 1410–1422; that stretch reads PASMSSAASAGSS. Residues 1423–1433 are compositionally biased toward gly residues; sequence SAGGGKLKGGS. Residue T1486 is modified to Phosphothreonine. 2 positions are modified to phosphoserine: S1488 and S1490. The short motif at 1652-1656 is the LXXLL motif 2 element; the sequence is LANLL. A disordered region spans residues 1790-1836; sequence GGSAVKSSNGDSPGSFCASSTAPAEMVVKQEPEDEDEKTPSVPGNPT. Over residues 1794-1811 the composition is skewed to polar residues; sequence VKSSNGDSPGSFCASSTA. The segment at 1895–1935 adopts a C2HC pre-PHD-type zinc-finger fold; that stretch reads TRQCVFCNQRGDGQADGPSRLLNFDVDKWVHLNCALWSNGV. The PHD-type zinc-finger motif lies at 1956–2003; sequence QACSACHQPGATIKCFKSRCNSLYHLPCAIREECVFYKNKSVHCSVHG. An LXXLL motif 3 motif is present at residues 2060 to 2064; the sequence is LSNLL. Residues 2061–2121 form the FYR N-terminal domain; that stretch reads SNLLRVGNMT…CRYICSIAEA (61 aa). The 88-residue stretch at 2122-2209 folds into the FYR C-terminal domain; the sequence is GCKPEFRIQV…ETLTDYRFKY (88 aa). Positions 2291 to 2407 constitute an SET domain; that stretch reads NNVYLARSKI…RGEELSYDYK (117 aa). One can recognise a Post-SET domain in the interval 2415 to 2431; the sequence is HKIPCACGAPNCRKWMN.

The protein belongs to the class V-like SAM-binding methyltransferase superfamily. Histone-lysine methyltransferase family. TRX/MLL subfamily. Component of the MLL3/4 complex composed at least of the catalytic subunit trr, ash2, Rbbp5, Dpy-30L1, wds, hcf, ptip, Pa1, Utx, Lpt and Ncoa6. Interacts with nuclear receptor EcR in an ecdysone-dependent manner. Interacts with ash2; the interaction stabilizes trr. In terms of tissue distribution, widely expressed.

The protein resides in the nucleus. It localises to the chromosome. The catalysed reaction is L-lysyl(4)-[histone H3] + 3 S-adenosyl-L-methionine = N(6),N(6),N(6)-trimethyl-L-lysyl(4)-[histone H3] + 3 S-adenosyl-L-homocysteine + 3 H(+). In terms of biological role, histone methyltransferase that acts as a coactivator for the ecdysone receptor during development. Specifically trimethylates 'Lys-4' of histone H3, a specific tag for epigenetic transcriptional activation. Recruited by EcR in an ecdysone-dependent manner causing H3 'Lys-4' trimethylation at ecdysone-inducible promoters, leading to activate expression. Plays a central role in the developing compound eye, during the progression of the morphogenetic furrow and in post-furrow differentiation of the retinal epithelium, notably by activating expression of hh. Also required for wing and abdominal development. This Drosophila melanogaster (Fruit fly) protein is Histone-lysine N-methyltransferase trr (trr).